The primary structure comprises 191 residues: Small ribosomal subunit protein uS5 (191 aa).

Residues 20–83 (FADRLVAINR…EQAKRQMIRV (64 aa)) enclose the S5 DRBM domain. The disordered stretch occupies residues 158–191 (TSPRMVAQRRGKKVSDILKKDGEPAEAAAEPAEA). Over residues 170–180 (KVSDILKKDGE) the composition is skewed to basic and acidic residues. The span at 182–191 (AEAAAEPAEA) shows a compositional bias: low complexity.

This sequence belongs to the universal ribosomal protein uS5 family. As to quaternary structure, part of the 30S ribosomal subunit. Contacts proteins S4 and S8.

Functionally, with S4 and S12 plays an important role in translational accuracy. Its function is as follows. Located at the back of the 30S subunit body where it stabilizes the conformation of the head with respect to the body. The chain is Small ribosomal subunit protein uS5 from Dinoroseobacter shibae (strain DSM 16493 / NCIMB 14021 / DFL 12).